The following is a 501-amino-acid chain: MSATTRTPATPGTPGTPGSLAMEVARVQNSALAEFKKPTAMVRHKNKPKILTEEKYIEEMSKIIQRDFFPDLERLRAQNDYLDAESRRDFVQMAEIRERYSLGRISGTGRSTSRRNNAMSPATFETPVSQAKCSNTPLPNSRATDTPFSTDGSEKSDAEGRDTTAKLSLDAFLQKYTSEDNQSFQEIIETAEAKLRQKYAVLYNHEKLSAEQLQRALMLPSIETQFEEPDPLRKIETWNYTNMNSIMYVPDGVEYTEEERVQLAERKQSIQHNATRLPDEAKHREMDTKKLNDEVPQNGAGGATATPKVRGFDLLRSPSPRPGEAFSPIMTWGEIDGTPFRLDGGDTPLRPTQGPSFRINENSRRENIAIALAERVSERMRNQKQMALDTARRNIGSPLIRTNMERLASMSPAAQLLATGKLGIRGTPRLRHTPSPMSGRKRKVTPGVVRSTNTPILGEPKPKQQAKISTPAKNVTIDTGSTLTDDLLKIPTKRRTAADFF.

2 stretches are compositionally biased toward low complexity: residues 1 to 18 (MSATTRTPATPGTPGTPG) and 105 to 115 (ISGTGRSTSRR). Disordered stretches follow at residues 1 to 20 (MSATTRTPATPGTPGTPGSL) and 105 to 163 (ISGT…GRDT). Over residues 126 to 151 (TPVSQAKCSNTPLPNSRATDTPFSTD) the composition is skewed to polar residues. Residues 152–163 (GSEKSDAEGRDT) are compositionally biased toward basic and acidic residues. A phosphoserine mark is found at Ser409 and Ser411. Positions 425–471 (RGTPRLRHTPSPMSGRKRKVTPGVVRSTNTPILGEPKPKQQAKISTP) are disordered.

Belongs to the ESS2 family.

The protein resides in the nucleus. This chain is Splicing factor ESS-2 homolog (Es2), found in Drosophila melanogaster (Fruit fly).